Reading from the N-terminus, the 264-residue chain is MSQGQPRRPQQPAGQGENQEPIKYGDVFNVSGELANKPIAPQDAAMMQTAETQVLGQTQKGGTAAVMQAAATRNEQVGVVGHNDITDIAGEQGVTLAETDVAGRRIITEAVAGQVVGQYVQATPVMTSQVGVVLQNAITIGEALEATAKTAGDKPVDQSDAAAVQAAEVRATGSNVIIPGGLAATAQSAAAHNATLDRDEEKIKLNQVLTGATAKLPADKAVTRQDAEGVVSAELRNNPNVATHPGGVAASMAAAARLNENVNA.

Residues 1–16 (MSQGQPRRPQQPAGQG) are compositionally biased toward low complexity. Residues 1 to 23 (MSQGQPRRPQQPAGQGENQEPIK) form a disordered region. SMP domains follow at residues 22–76 (IKYG…RNEQ), 138–194 (ITIG…AHNA), and 203–261 (IKLN…LNEN).

It belongs to the LEA type SMP family.

In terms of biological role, LEA proteins are late embryonic proteins abundant in higher plant seed embryos. There are two subsets of LEA proteins (5a and 5b), the first ones are expressed when the cotyledon weight reach 80 mg and the second set are expressed above 100 mg. The function of those proteins is not known. This is Late embryogenesis abundant protein D-34 from Gossypium hirsutum (Upland cotton).